The following is a 1589-amino-acid chain: Mediator of RNA polymerase II transcription subunit 23 (1589 aa).

Positions 1381–1499 (YVSQNEPAPP…PPTPAPMHHQ (119 aa)) are disordered. The span at 1392-1410 (TPEREKTPERKDQQKEQQE) shows a compositional bias: basic and acidic residues. Low complexity predominate over residues 1457-1470 (LHHQQQQQQHLSQM).

It belongs to the Mediator complex subunit 23 family. As to quaternary structure, component of the Mediator complex.

It localises to the nucleus. Component of the Mediator complex, a coactivator involved in the regulated transcription of nearly all RNA polymerase II-dependent genes. Mediator functions as a bridge to convey information from gene-specific regulatory proteins to the basal RNA polymerase II transcription machinery. Mediator is recruited to promoters by direct interactions with regulatory proteins and serves as a scaffold for the assembly of a functional preinitiation complex with RNA polymerase II and the general transcription factors. The protein is Mediator of RNA polymerase II transcription subunit 23 (sur-2) of Caenorhabditis briggsae.